The sequence spans 308 residues: Very-long-chain enoyl-CoA reductase (308 aa).

At 1-86 (MKHYEVEIRD…YFRDLGAQIS (86 aa)) the chain is on the cytoplasmic side. K22 is modified (N6-acetyllysine). Residue S58 is modified to Phosphoserine. N6-acetyllysine is present on K60. Residues 87-106 (WVTVFLTEYAGPLFIYLLFY) form a helical membrane-spanning segment. The Lumenal segment spans residues 107-124 (FRVPFIYGRKYDFTSSRH). The chain crosses the membrane as a helical span at residues 125–147 (TVVHLACMCHSFHYIKRLLETLF). Topologically, residues 148-158 (VHRFSHGTMPL) are cytoplasmic. Residues 159-180 (RNIFKNCTYYWGFAAWMAYYIN) traverse the membrane as a helical segment. The Lumenal portion of the chain corresponds to 181–189 (HPLYTPPTY). A helical membrane pass occupies residues 190–216 (GVQQVKLALAVFVICQLGNFSIHMALR). Topologically, residues 217-245 (DLRPAGSKTRKIPYPTKNPFTWLFLLVSC) are cytoplasmic. The chain crosses the membrane as a helical span at residues 246 to 262 (PNYTYEVGSWIGFAILT). At 263-264 (QC) the chain is on the lumenal side. A helical transmembrane segment spans residues 265-292 (VPVALFSLVGFTQMTIWAKGKHRSYLKE). The Cytoplasmic segment spans residues 293 to 308 (FRDYPPLRMPIIPFLL).

The protein belongs to the steroid 5-alpha reductase family. As to quaternary structure, interacts with ELOVL1 and LASS2. Glycosylated.

It localises to the endoplasmic reticulum membrane. The catalysed reaction is a very-long-chain 2,3-saturated fatty acyl-CoA + NADP(+) = a very-long-chain (2E)-enoyl-CoA + NADPH + H(+). It carries out the reaction octadecanoyl-CoA + NADP(+) = (2E)-octadecenoyl-CoA + NADPH + H(+). The enzyme catalyses (2E,7Z,10Z,13Z,16Z)-docosapentaenoyl-CoA + NADPH + H(+) = (7Z,10Z,13Z,16Z)-docosatetraenoyl-CoA + NADP(+). It catalyses the reaction (2E,7Z,10Z,13Z,16Z,19Z)-docosahexaenoyl-CoA + NADPH + H(+) = (7Z,10Z,13Z,16Z,19Z)-docosapentaenoyl-CoA + NADP(+). The catalysed reaction is (2E,8Z,11Z,14Z)-eicosatetraenoyl-CoA + NADPH + H(+) = (8Z,11Z,14Z)-eicosatrienoyl-CoA + NADP(+). It carries out the reaction (2E)-hexadecenoyl-CoA + NADPH + H(+) = hexadecanoyl-CoA + NADP(+). Its pathway is lipid metabolism; fatty acid biosynthesis. The protein operates within lipid metabolism; sphingolipid metabolism. Its function is as follows. Involved in both the production of very long-chain fatty acids for sphingolipid synthesis and the degradation of the sphingosine moiety in sphingolipids through the sphingosine 1-phosphate metabolic pathway. Catalyzes the last of the four reactions of the long-chain fatty acids elongation cycle. This endoplasmic reticulum-bound enzymatic process, allows the addition of 2 carbons to the chain of long- and very long-chain fatty acids/VLCFAs per cycle. This enzyme reduces the trans-2,3-enoyl-CoA fatty acid intermediate to an acyl-CoA that can be further elongated by entering a new cycle of elongation. Thereby, it participates in the production of VLCFAs of different chain lengths that are involved in multiple biological processes as precursors of membrane lipids and lipid mediators. Catalyzes the saturation step of the sphingosine 1-phosphate metabolic pathway, the conversion of trans-2-hexadecenoyl-CoA to palmitoyl-CoA. In Mus musculus (Mouse), this protein is Very-long-chain enoyl-CoA reductase (Tecr).